Consider the following 424-residue polypeptide: Putative polyketide beta-ketoacyl synthase 2 (424 aa).

Positions 13–416 (SRRAVVTGLG…GSNSALVLRR (404 aa)) constitute a Ketosynthase family 3 (KS3) domain.

Belongs to the thiolase-like superfamily. Beta-ketoacyl-ACP synthases family.

Functionally, involved in developmentally regulated synthesis of a compound biosynthetically related to polyketide antibiotics which is essential for spore color in Streptomyces coelicolor. This is Putative polyketide beta-ketoacyl synthase 2 from Streptomyces coelicolor (strain ATCC BAA-471 / A3(2) / M145).